We begin with the raw amino-acid sequence, 87 residues long: Small ribosomal subunit protein uS17 (87 aa).

The protein belongs to the universal ribosomal protein uS17 family. As to quaternary structure, part of the 30S ribosomal subunit.

In terms of biological role, one of the primary rRNA binding proteins, it binds specifically to the 5'-end of 16S ribosomal RNA. The sequence is that of Small ribosomal subunit protein uS17 from Onion yellows phytoplasma (strain OY-M).